A 441-amino-acid chain; its full sequence is MTHDNIDILVVDDDISHCTILQALLRGWGYNVALANSGRQALEQVREQVFDLVLCDVRMAEMDGIATLKEIKALNPAIPVLIMTAYSSVETAVEALKTGALDYLIKPLDFDNLQATLEKALAHTHSIDAETPAVTASQFGMVGKSPAMQHLLSEIALVAPSEATVLIHGDSGTGKELVARAIHASSARSEKPLVTLNCAALNESLLESELFGHEKGAFTGADKRREGRFVEADGGTLFLDEIGDISPMMQVRLLRAIQEREVQRVGSNQIISVDVRLIAATHRDLAAEVNAGRFRQDLYYRLNVVAIEVPSLRQRREDIPLLAGHFLQRFAERNRKAVKGFTPQAMDLLIHYDWPGNIRELENAVERAVVLLTGEYISERELPLAIASTPIPLGQSQDIQPLVEVEKEVILAALEKTGGNKTEAARQLGITRKTLLAKLSR.

Positions 7 to 121 constitute a Response regulatory domain; it reads DILVVDDDIS…NLQATLEKAL (115 aa). At Asp-56 the chain carries 4-aspartylphosphate. The region spanning 141–370 is the Sigma-54 factor interaction domain; sequence MVGKSPAMQH…LENAVERAVV (230 aa). Residues Gly-172, Thr-173, Arg-329, and Arg-359 each coordinate ATP. The H-T-H motif DNA-binding region spans 421–440; it reads KTEAARQLGITRKTLLAKLS.

In terms of assembly, monomer. Phosphorylated by ZraS.

The protein resides in the cytoplasm. With respect to regulation, activity of the ZraS/ZraR two-component system is repressed by the zinc-bound form of ZraP, which probably interacts with the periplasmic region of ZraS. Part of the Zra signaling pathway, an envelope stress response (ESR) system composed of the periplasmic accessory protein ZraP, the histidine kinase ZraS and the transcriptional regulator ZraR. The ZraPSR system contributes to antibiotic resistance and is important for membrane integrity in the presence of membrane-targeting biocides. ZraR is a member of the two-component regulatory system ZraS/ZraR. When activated by ZraS, acts in conjunction with sigma-54 to regulate the expression of zraP in the presence of high Zn(2+) or Pb(2+) concentrations. Also positively autoregulates the expression of the zraSR operon. Binds to a region within the zraP-zraSR intergenic region that is characterized by two inverted repeats separated by a 14 bp spacer. In addition, controls a regulon of genes of diverse functions that may be critical to maintain envelope integrity and cell survival under stressful conditions. The system has no direct role in zinc or copper resistance. The protein is Transcriptional regulatory protein ZraR of Escherichia coli (strain K12).